A 252-amino-acid chain; its full sequence is Small ribosomal subunit protein uS2 (252 aa).

This sequence belongs to the universal ribosomal protein uS2 family.

The protein is Small ribosomal subunit protein uS2 of Alcanivorax borkumensis (strain ATCC 700651 / DSM 11573 / NCIMB 13689 / SK2).